We begin with the raw amino-acid sequence, 159 residues long: Immunoglobulin J chain (159 aa).

Residues 1–21 (MKTHLLLWGVLAIFVKAVLVT) form the signal peptide. 3 disulfide bridges follow: Cys-34/Cys-123, Cys-93/Cys-113, and Cys-131/Cys-156. Residue Asn-70 is glycosylated (N-linked (GlcNAc...) (complex) asparagine).

As to quaternary structure, part of the secretory IgA (sIgA) complex that consists of two, four or five IgA monomers, and two additional non-Ig polypeptides, namely the JCHAIN and the secretory component (the proteolytic product of PIGR). Part of the secretory IgM (sIgM) complex that consist of five IgM monomers, and two additional non-Ig polypeptides, namely the JCHAIN and the secretory component (the proteolytic product of PIGR). JCHAIN-containing IgM interacts (via CH4 domain) with FCRM (via Ig-like domain).

The protein localises to the secreted. Functionally, serves to link two monomer units of either IgM or IgA. In the case of IgM, the J chain-joined dimer is a nucleating unit for the IgM pentamer, and in the case of IgA it induces dimers and/or larger polymers. It also helps to bind these immunoglobulins to secretory component. The chain is Immunoglobulin J chain from Mus musculus (Mouse).